The primary structure comprises 253 residues: GTP cyclohydrolase 1 type 2 homolog (253 aa).

A divalent metal cation is bound by residues histidine 64, histidine 65, aspartate 101, histidine 222, and glutamate 226.

It belongs to the GTP cyclohydrolase I type 2/NIF3 family. Homohexamer.

This is GTP cyclohydrolase 1 type 2 homolog from Halobacterium salinarum (strain ATCC 700922 / JCM 11081 / NRC-1) (Halobacterium halobium).